A 1170-amino-acid polypeptide reads, in one-letter code: Thrombospondin-1 (1170 aa).

The signal sequence occupies residues 1-18 (MGLAWGLGVLFLMHVCGT). The segment at 47 to 95 (RLVKGPDPSSPAFRIEDANLIPPVPDDKFQDLVDAVRAEKGFLLLASLR) is heparin-binding. The region spanning 65–270 (NLIPPVPDDK…HKTKDLQAIC (206 aa)) is the Laminin G-like domain. Cysteine 171 and cysteine 232 are disulfide-bonded. N-linked (GlcNAc...) asparagine glycans are attached at residues asparagine 248 and asparagine 360. The region spanning 316 to 373 (PLCYHNGVQYRNNEEWTVDSCTECHCQNSVTICKKVSCPIMPCSNATVPDGECCPRCW) is the VWFC domain. TSP type-1 domains lie at 379-429 (DDGW…QECD), 435-490 (DGGW…DACP), and 492-547 (NGGW…QDCP). Residue tryptophan 385 is glycosylated (C-linked (Man) tryptophan). Disulfide bonds link cysteine 391/cysteine 423, cysteine 395/cysteine 428, and cysteine 406/cysteine 413. Serine 394 carries an O-linked (Fuc...) serine glycan. C-linked (Man) tryptophan glycans are attached at residues tryptophan 438 and tryptophan 441. Disulfide bonds link cysteine 447/cysteine 484, cysteine 451/cysteine 489, and cysteine 462/cysteine 474. Threonine 450 carries O-linked (Fuc...) threonine glycosylation. Tryptophan 498 carries a C-linked (Man) tryptophan glycan. 21 cysteine pairs are disulfide-bonded: cysteine 504/cysteine 541, cysteine 508/cysteine 546, cysteine 519/cysteine 531, cysteine 551/cysteine 562, cysteine 556/cysteine 572, cysteine 575/cysteine 586, cysteine 592/cysteine 608, cysteine 599/cysteine 617, cysteine 620/cysteine 644, cysteine 650/cysteine 663, cysteine 657/cysteine 676, cysteine 678/cysteine 689, cysteine 705/cysteine 713, cysteine 718/cysteine 738, cysteine 754/cysteine 774, cysteine 777/cysteine 797, cysteine 813/cysteine 833, cysteine 836/cysteine 856, cysteine 874/cysteine 894, cysteine 910/cysteine 930, and cysteine 946/cysteine 1167. Threonine 507 carries an O-linked (Fuc...) threonine glycan. Residues 531 to 1152 (CVGDVTENQI…YAGGRLGLFV (622 aa)) are involved in retention in extracellular matrix (ECM); involved in trimer formation. The EGF-like 1 domain maps to 547 to 587 (PIDGCLSNPCFAGVKCTSYPDGSWKCGACPPGYSGNGIQCT). O-linked (Xyl) serine glycosylation occurs at serine 553. The EGF-like 2 domain maps to 646–690 (PRNPCTDGTHDCNKNAKCNYLGHYSDPMYRCECKPGYAGNGIICG). 8 TSP type-3 repeats span residues 691 to 726 (EDTD…NSGQ), 727 to 762 (EDYD…NPAQ), 763 to 785 (YDYD…NPDQ), 786 to 821 (ADTD…NVDQ), 822 to 844 (RDTD…NPDQ), 845 to 882 (LDSD…NANQ), 883 to 918 (ADHD…NPDQ), and 919 to 954 (KDSD…DISE). N-linked (GlcNAc...) asparagine glycosylation is present at asparagine 708. Positions 839–934 (EHNPDQLDSD…GRGDACKDDF (96 aa)) are disordered. Basic and acidic residues-rich tracts occupy residues 840-854 (HNPD…RIGD), 883-894 (ADHDKDGKGDAC), and 917-934 (DQKD…KDDF). The short motif at 926-928 (RGD) is the Cell attachment site element. In terms of domain architecture, TSP C-terminal spans 958-1170 (RRFQMIPLDP…SDLKYECRDP (213 aa)). The N-linked (GlcNAc...) asparagine glycan is linked to asparagine 1067.

Belongs to the thrombospondin family. As to quaternary structure, homotrimer; disulfide-linked. Can bind to fibrinogen, fibronectin, laminin, type V collagen and integrins alpha-V/beta-1, alpha-V/beta-3 and alpha-IIb/beta-3. Binds heparin. Interacts (via the C-terminal domain) with CD47. Interacts (via the TSP type I repeats) with CD36; the interaction conveys an antiangiogenic effect. Interacts (via the TSP type I repeats) with HRG; the interaction blocks the antiangiogenic effect of THBS1 with CD36. Interacts with ATF6 (via lumenal domain). Interacts with FN1; this interaction is enhanced by TNFAIP6, which may act as a bridging molecule between FN1 and THBS1. Interacts with SIRPA; the interaction stimulates phosphorylation of SIRPA. Expressed by platelets (at protein level). Expressed by monocyte-derived immature and mature dendritic cells (at protein level).

It localises to the secreted. It is found in the cell surface. The protein localises to the extracellular space. The protein resides in the extracellular matrix. Its subcellular location is the endoplasmic reticulum. It localises to the sarcoplasmic reticulum. In terms of biological role, adhesive glycoprotein that mediates cell-to-cell and cell-to-matrix interactions. Multifunctional, involved in inflammation, angiogenesis, wound healing, reactive oxygen species (ROS) signaling, nitrous oxide (NO) signaling, apoptosis, senescence, aging, cellular self-renewal, stemness, and cardiovascular and metabolic homeostasis. Negatively modulates dendritic cell activation and cytokine release, as part of an autocrine feedback loop, contributing to the resolution of inflammation and immune homeostasis. Ligand for receptor CD47. Modulates nitrous oxide (NO) signaling via CD47, hence playing a role as a pressor agent, supporting blood pressure. Plays a role in endothelial cell senescence, acting via CD47, by increasing the abundance and activation of NADPH oxidase NOX1, and so generating excess ROS. Inhibits stem cell self-renewal, acting via CD47 signaling, probably by regulation of the stem cell transcription factors POU5F1/OCT4, SOX2, MYC/c-Myc and KLF4. Negatively modulates wound healing, acting via CD47. Ligand for receptor CD36. Involved in inducing apoptosis in podocytes in response to elevated free fatty acids, acting via CD36. Plays a role in suppressing angiogenesis, acting, depending on context, via CD36 or CD47. Promotes cellular senescence in a TP53-CDKN1A-RB1 signaling-dependent manner. Ligand for immunoglobulin-like cell surface receptor SIRPA. Involved in ROS signaling in non-phagocytic cells, stimulating NADPH oxidase-derived ROS production, acting via interaction with SIRPA. Plays a role in metabolic dysfunction in diet-induced obesity, perhaps acting by exacerbating adipose inflammatory activity; its effects may be mediated, at least in part, through enhanced adipocyte proliferation. Plays a role in ER stress response, via its interaction with the activating transcription factor 6 alpha (ATF6) which produces adaptive ER stress response factors. May be involved in age-related conditions, including metabolic dysregulation, during normal aging. This Homo sapiens (Human) protein is Thrombospondin-1.